The primary structure comprises 196 residues: Imidazole glycerol phosphate synthase subunit HisH (196 aa).

Residues 2-196 (NIVIIDTNCS…QQLVKNFLEI (195 aa)) form the Glutamine amidotransferase type-1 domain. Cys-77 (nucleophile) is an active-site residue. Active-site residues include His-178 and Glu-180.

Heterodimer of HisH and HisF.

Its subcellular location is the cytoplasm. The catalysed reaction is 5-[(5-phospho-1-deoxy-D-ribulos-1-ylimino)methylamino]-1-(5-phospho-beta-D-ribosyl)imidazole-4-carboxamide + L-glutamine = D-erythro-1-(imidazol-4-yl)glycerol 3-phosphate + 5-amino-1-(5-phospho-beta-D-ribosyl)imidazole-4-carboxamide + L-glutamate + H(+). It carries out the reaction L-glutamine + H2O = L-glutamate + NH4(+). Its pathway is amino-acid biosynthesis; L-histidine biosynthesis; L-histidine from 5-phospho-alpha-D-ribose 1-diphosphate: step 5/9. IGPS catalyzes the conversion of PRFAR and glutamine to IGP, AICAR and glutamate. The HisH subunit catalyzes the hydrolysis of glutamine to glutamate and ammonia as part of the synthesis of IGP and AICAR. The resulting ammonia molecule is channeled to the active site of HisF. This Blochmanniella pennsylvanica (strain BPEN) protein is Imidazole glycerol phosphate synthase subunit HisH.